The chain runs to 382 residues: Aminotransferase FGSG_00049 (382 aa).

Arginine 80 contacts pyridoxal 5'-phosphate. Lysine 181 carries the post-translational modification N6-(pyridoxal phosphate)lysine. A pyridoxal 5'-phosphate-binding site is contributed by glutamate 217.

It belongs to the class-IV pyridoxal-phosphate-dependent aminotransferase family. Requires pyridoxal 5'-phosphate as cofactor.

It functions in the pathway mycotoxin biosynthesis. Aminotransferase; part of the gene cluster that mediates the biosynthesis of gramillins A and B, bicyclic lipopeptides that induce cell death in maize leaves but not in wheat leaves. The nonribosomal peptide synthetase GRA1 incorporates respectively a glutamic adic (Glu), a leucine (Leu), a serine (Ser), a hydroxyglutamine (HOGln), a 2-amino decanoic acid, and 2 cysteins (CysB and CysA). The biosynthesis of 2-amino decanoic acid incorporated in gramillins could be initiated by a fatty acid synthase composed of the alpha and beta subunits FGSG_00036 and FGSG_11656. The cytochrome P450 monooxygenase FGSG_15680 could hydroxylate the fatty acid chain. Subsequent oxidation to the ketone by the oxidoreductase FGSG_00048 and transamination by aminotransferase FGSG_00049 could form 2-amino-decanoic acid. On the other hand, FGSG_15680 could also be responsible for the HO-modified glutamine at the gamma-position. Whether hydroxylation occurs on the fully assembled product or on the Gln residue prior to assembly into the gramillins requires further proof. The thioredoxin FGSG_00043 could also be required for the disulfide-bond formation between CysA and CysB. The specific involvement of the remaining proteins from the cluster is more difficult to discern, but could have broader regulatory (FGSG_00040 and FGSG_11657) or enzymatic functions (FGSG_00044 and FGSG_00045). The final C-domain of GRA1 does not possess the expected sequence of a termination CT domain, often implicated in macrocyclization and release of a cyclopeptidein fungal NRPs; and the thioesterase FGSG_00047 may act in concert with the terminal C-domain of GRA1 to catalyze the formation of the macrocyclic anhydride and release of the products. The sequence is that of Aminotransferase FGSG_00049 from Gibberella zeae (strain ATCC MYA-4620 / CBS 123657 / FGSC 9075 / NRRL 31084 / PH-1) (Wheat head blight fungus).